The chain runs to 507 residues: TOM1-like protein 2 (507 aa).

The 133-residue stretch at alanine 20–proline 152 folds into the VHS domain. Serine 160 bears the Phosphoserine mark. Residue threonine 164 is modified to Phosphothreonine. The disordered stretch occupies residues threonine 164–tyrosine 200. In terms of domain architecture, GAT spans glutamate 219 to arginine 307. Positions asparagine 329 to glycine 334 match the Clathrin-binding motif. The interval glutamate 466 to leucine 507 is disordered. Positions glutamate 498–leucine 507 are enriched in basic and acidic residues.

It belongs to the TOM1 family. In terms of assembly, interacts with clathrin, SRC and TOLLIP. Interacts with MYO6. As to expression, ubiquitously expressed. Splicing pattern displays tissue specific variation.

Functionally, acts as a MYO6/Myosin VI adapter protein that targets myosin VI to endocytic structures. May also play a role in recruiting clathrin to endosomes. May regulate growth factor-induced mitogenic signaling. The polypeptide is TOM1-like protein 2 (Tom1l2) (Mus musculus (Mouse)).